A 405-amino-acid chain; its full sequence is Teichoic acid D-alanyltransferase (405 aa).

Residues 1–9 (MLNLQPYEN) lie on the Extracellular side of the membrane. The helical transmembrane segment at 10-29 (PQYFVYLIIALLPVIIGMFK) threads the bilayer. The Cytoplasmic portion of the chain corresponds to 30–33 (GFRM). The helical transmembrane segment at 34 to 49 (HWYESIFSLVFLVLIF) threads the bilayer. At 50–53 (DADK) the chain is on the extracellular side. The helical transmembrane segment at 54-80 (WPQGKALLGYVVFNLLLVYAYFKYRTR) threads the bilayer. Over 81–86 (EGSKNS) the chain is Cytoplasmic. The chain crosses the membrane as a helical span at residues 87–111 (TAVFYLSVALGIAHVAVVKFTPLFQ). The Extracellular portion of the chain corresponds to 112–121 (HHGSILGFLG). A helical membrane pass occupies residues 122-138 (ISYLTFRVVGTIMEIRD). At 139–145 (GSIKDLN) the chain is on the cytoplasmic side. An intramembrane segment occupies 146–175 (MWKFIQFLLFFPTISSGPIDRYRRFVKDYD). Residues 176 to 179 (RVPD) are Cytoplasmic-facing. The chain crosses the membrane as a helical span at residues 180-223 (PEHYAQLVTKAIHYLMLGFLYKFILGYIFGTLWLPSVEHMAMAS). The Extracellular portion of the chain corresponds to 224-232 (RGGAFLGLS). A helical membrane pass occupies residues 233 to 264 (WPVVGVMYAYSGYLFFDFAGYSLFAVAISYLM). The Cytoplasmic portion of the chain corresponds to 265 to 274 (GIETPMNFNK). An intramembrane segment occupies 275–310 (PWSHITSRLLNRWQLSLSFWFRDYIYMRFVFFMMKH). Residues 311 to 315 (KWIKS) are Cytoplasmic-facing. A helical membrane pass occupies residues 316 to 335 (RVWTAFVGYLVLFLIMGIWH). Histidine 335 is a catalytic residue. Over 336–338 (GET) the chain is Extracellular. The chain crosses the membrane as a helical span at residues 339–372 (WYYIVYGLFHAMLINLTDAWLRFKKKHKDFFPHN). The Cytoplasmic segment spans residues 373-378 (RATHYP). The helical transmembrane segment at 379-399 (SPFSMTANAVCFSFLIFSGFL) threads the bilayer. Topologically, residues 400 to 405 (DKLWFH) are extracellular.

This sequence belongs to the membrane-bound acyltransferase family.

It is found in the cell membrane. The protein operates within cell wall biogenesis; lipoteichoic acid biosynthesis. O-acyltransferase that catalyzes D-alanylation of both teichoic acid and lipoteichoic acid (LTA). D-alanylation of LTA plays an important role in modulating the properties of the cell wall in Gram-positive bacteria, influencing the net charge of the cell wall. Catalyzes D-alanylation from DltC carrier protein. The polypeptide is Teichoic acid D-alanyltransferase (Lacticaseibacillus rhamnosus (Lactobacillus rhamnosus)).